The following is a 505-amino-acid chain: Catalase (505 aa).

The interval 1-25 (MSKQDGKLTGLFGAPVSDRENSMTA) is disordered. Catalysis depends on residues His-56 and Asn-129. Tyr-339 contributes to the heme binding site.

Belongs to the catalase family. In terms of assembly, homodimer. Heme is required as a cofactor.

It catalyses the reaction 2 H2O2 = O2 + 2 H2O. Its function is as follows. Decomposes hydrogen peroxide into water and oxygen; serves to protect cells from the toxic effects of hydrogen peroxide. This is Catalase (katA) from Staphylococcus warneri.